Here is a 223-residue protein sequence, read N- to C-terminus: Serum amyloid P-component (223 aa).

A signal peptide spans 1 to 19 (MDKMLFWVSVFTIFLDVFA). Residues 24-223 (DKKVFVFPRE…YVIIKPRVWD (200 aa)) form the Pentraxin (PTX) domain. Cysteines 55 and 114 form a disulfide. The Ca(2+) site is built by D77, N78, E155, Q156, D157, and Q167. An N-linked (GlcNAc...) asparagine glycan is attached at N198.

It belongs to the pentraxin family. As to quaternary structure, homopentamer. Pentraxin (or pentaxin) have a discoid arrangement of 5 non-covalently bound subunits. Requires Ca(2+) as cofactor.

Its subcellular location is the secreted. This chain is Serum amyloid P-component (PTX2), found in Cavia porcellus (Guinea pig).